Reading from the N-terminus, the 341-residue chain is THO complex subunit 6 homolog (341 aa).

7 WD repeats span residues 22 to 61 (RLHM…SSEA), 74 to 112 (AHDG…GCKE), 124 to 163 (LEVP…FTRA), 166 to 205 (GHTD…EVQT), 215 to 254 (SRPH…PTTV), 256 to 293 (PIRA…KAQV), and 295 to 339 (GSSP…AFSL). Serine 180 carries the post-translational modification Phosphoserine.

The protein belongs to the WD repeat THOC6 family. In terms of assembly, component of the THO subcomplex, which is composed of THOC1, THOC2, THOC3, THOC5, THOC6 and THOC7. The THO subcomplex interacts with DDX39B to form the THO-DDX39B complex which multimerizes into a 28-subunit tetrameric assembly. Component of the transcription/export (TREX) complex at least composed of ALYREF/THOC4, DDX39B, SARNP/CIP29, CHTOP and the THO subcomplex; in the complex interacts with THOC5; together with THOC5 and THOC7, plays a key structural role in the oligomerization of the THO-DDX39B complex. TREX seems to have a dynamic structure involving ATP-dependent remodeling.

It is found in the nucleus. The protein localises to the nucleus speckle. Functionally, component of the THO subcomplex of the TREX complex which is thought to couple mRNA transcription, processing and nuclear export, and which specifically associates with spliced mRNA and not with unspliced pre-mRNA. Plays a key structural role in the oligomerization of the THO-DDX39B complex. TREX is recruited to spliced mRNAs by a transcription-independent mechanism, binds to mRNA upstream of the exon-junction complex (EJC) and is recruited in a splicing- and cap-dependent manner to a region near the 5' end of the mRNA where it functions in mRNA export to the cytoplasm via the TAP/NXF1 pathway. Plays a role in apoptosis negative control involved in brain development. The polypeptide is THO complex subunit 6 homolog (Thoc6) (Rattus norvegicus (Rat)).